Here is a 341-residue protein sequence, read N- to C-terminus: Solute carrier family 25 member 43 (341 aa).

Solcar repeat units follow at residues 11-101 (TGSQ…MDDL), 105-185 (SQWS…LLVY), and 200-298 (SHLQ…LYQN). A run of 6 helical transmembrane segments spans residues 16 to 36 (LLCA…LELA), 68 to 88 (LWKG…VQLA), 110 to 130 (IVTG…TDLI), 166 to 186 (GVSL…LVYM), 205 to 225 (FANV…FDTV), and 262 to 282 (VLGL…YFGV).

Belongs to the mitochondrial carrier (TC 2.A.29) family.

Its subcellular location is the mitochondrion inner membrane. This is Solute carrier family 25 member 43 (Slc25a43) from Mus musculus (Mouse).